Reading from the N-terminus, the 231-residue chain is CLAVATA3/ESR (CLE)-related protein 4B-2 (231 aa).

The signal sequence occupies residues 1 to 21; the sequence is MATNTMLCLLILSVVLALAFA. A required for secretion from the host cytoplasm to the host apoplasm region spans residues 21–83; that stretch reads ATNKKGDEEP…SNQLPNNNWM (63 aa). A glycan (N-linked (GlcNAc...) asparagine) is linked at N32. The interval 116–231 is disordered; the sequence is RKTGMHSQRH…APAGPDPIHH (116 aa). Basic and acidic residues-rich tracts occupy residues 125-137 and 144-221; these read HHEETTLEQEKRV and PIHH…EKRG. One copy of the A-1 repeat lies at 127–135; that stretch reads EETTLEQEK. Residues 127-219 are 5 X approximate repeat A; the sequence is EETTLEQEKR…HEETTFEQEK (93 aa). One copy of the CLE-1 repeat lies at 136–147; the sequence is RVAGAGPDPIHH. The 5 X approximate repeat CLE stretch occupies residues 136-231; it reads RVAGAGPDPI…APAGPDPIHH (96 aa). Residues 148 to 156 form an A-2 repeat; it reads EETTLEQEK. Residues 157 to 168 form a CLE-2 repeat; sequence RAVPAGPDPKHH. The stretch at 169–177 is one A-3 repeat; it reads EETTLEQEK. The CLE-3 repeat unit spans residues 178–189; sequence RAVPAGPDPKHH. The A-4 repeat unit spans residues 190-198; that stretch reads EETTLEQEK. One copy of the CLE-4 repeat lies at 199 to 210; the sequence is RAVPAGPDPKHH. One copy of the A-5 repeat lies at 211–219; it reads EETTFEQEK. One copy of the CLE-5 repeat lies at 220-231; it reads RGAPAGPDPIHH.

The protein belongs to the CLV3/ESR signal peptide family. As to expression, highly expressed exclusively within the dorsal esophageal gland cell during syncytium formation in host plants.

Its subcellular location is the secreted. It localises to the host cytoplasm. The protein localises to the host extracellular space. The protein resides in the extracellular space. It is found in the apoplast. Its function is as follows. Mimics host plant CLE extracellular signal peptides that regulate cell fate. May play a role in the differentiation or division of feeding cells (syncytia) induced in plant roots during infection. This is CLAVATA3/ESR (CLE)-related protein 4B-2 (CLE-4B-2) from Globodera rostochiensis (Golden nematode worm).